A 329-amino-acid chain; its full sequence is COP9 signalosome complex subunit 6 (329 aa).

Residues 44–175 form the MPN domain; sequence TRVKAQAACS…VTIYESELHV (132 aa).

This sequence belongs to the peptidase M67A family. CSN6 subfamily. In terms of assembly, component of the CSN complex, probably composed of CSN1, CSN2, CSN3, CSN4, CSN5, CSN6, CSN7 and CSN8.

Functionally, component of the COP9 signalosome complex (CSN), a complex involved in various cellular and developmental processes such as photomorphogenesis and response to hormones. The CSN complex is an essential regulator of the ubiquitin (Ubl) conjugation pathway by mediating the deneddylation of the cullin subunits of SCF-type E3 ligase complexes, leading to decrease the Ubl ligase activity of SCF. Involved in early response to iron deficiency. This Oryza sativa subsp. japonica (Rice) protein is COP9 signalosome complex subunit 6.